We begin with the raw amino-acid sequence, 571 residues long: Zinc metalloproteinase-disintegrin-like jararhagin (571 aa).

The propeptide occupies A1–A150. Position 151 is a pyrrolidone carboxylic acid (Glu) (E151). A Peptidase M12B domain is found at K159 to P355. Positions 162 and 246 each coordinate Ca(2+). 3 disulfides stabilise this stretch: C270–C350, C310–C334, and C312–C317. H295 serves as a coordination point for Zn(2+). The active site involves E296. Residues H299 and H305 each coordinate Zn(2+). The N-linked (GlcNAc...) asparagine glycan is linked to N333. Residues C350, N353, V365, N368, L370, E372, E375, and D378 each coordinate Ca(2+). The region spanning P363–N449 is the Disintegrin domain. 22 cysteine pairs are disulfide-bonded: C366–C385, C366–C395, C377–C390, C377–C395, C379–C385, C389–C412, C403–C409, C408–C434, C421–C441, C428–C453, C428–C460, C453–C465, C460–C465, C472–C487, C472–C522, C487–C533, C500–C510, C510–C517, C517–C559, C522–C533, C553–C564, and C559–C564. A D/ECD-tripeptide motif is present at residues E427–D429. Residues D429, P430, E432, D444, and V445 each coordinate Ca(2+).

The protein belongs to the venom metalloproteinase (M12B) family. P-III subfamily. P-IIIb sub-subfamily. In terms of assembly, monomer (Jararhagin and Jararhagin-C) and dimer (Jaracetin). Zn(2+) is required as a cofactor. Post-translationally, the N-terminus of Jararhagin is blocked. In terms of tissue distribution, expressed by the venom gland.

It localises to the secreted. It catalyses the reaction Cleavage of 10-His-|-Leu-11, 14-Ala-|-Leu-15, 16-Tyr-|-Leu-17 and 24-Phe-|-Phe-25 bonds in insulin B chain.. Inhibited by EDTA, 1,10 phenanthroline and batimastat (a peptidomimetic MMP inhibitor). Its function is as follows. Snake venom zinc metalloproteinase-disintegrin-like jararhagin: causes hemorrhage. This is the result of the degradation of sub-endothelial matrix proteins leading to the disruption of the blood vessel endothelium, with accompanying disturbances in platelet function. It is able to degrade von Willebrand factor (vWF) and it hydrolyzes the alpha-chain of fibrinogen (FGA) while leaving the beta and gamma chains unaffected. It inhibits collagen-induced platelet aggregation through the binding to alpha-2/beta-1 integrin (ITGA2/ITGB1) (collagen receptor), and it cleaves the beta-1 subunit of the same integrin, inhibiting platelet interaction and ultimately causing impairment of signal transduction. It has inability to be affected by the plasma inhibitor alpha(2)-macroglobulin. In fibroblasts, it functions as a collagen-mimetic substrate and, in endothelial cells, it causes apoptosis and indirectly inhibits cell proliferation by release of angiostatin-like compounds. It induces a strong pro-inflammatory response characterized by intense leukocyte accumulation and release of cytokines at the site of the injection. Although hemorrhage and edema are a response to the direct effect of this toxin, jararhagin-induced inflammation and necrosis are dependent on macrophages and key pro-inflammatory cytokines or their receptors. It also possesses anti-tumorgenic properties. In terms of biological role, the monomeric form inhibits collagen- and ADP-induced platelet aggregation, but has no effect on glycoprotein Ib-IX-dependent (GP1BA/GP5/GP9) platelet agglutination. Locally activates the early events of an acute inflammatory response as leukocyte rolling and pro-inflammatory cytokine release. Functionally, the dimeric form jaracetin may be a dimeric form of jararhagin-C. It binds to von Willebrand factor (VWF) and induces its interaction with GPIbalpha (GP1BA) (via the vWF A1 domain), resulting in platelet aggregation. Also binds the alpha-2 subunit of the alpha-2/beta-1 (ITGA2/ITGB1) integrin. It potently induces platelet aggregation in citrated platelet-rich plasma. The sequence is that of Zinc metalloproteinase-disintegrin-like jararhagin from Bothrops jararaca (Jararaca).